We begin with the raw amino-acid sequence, 89 residues long: Small ribosomal subunit protein uS14 (89 aa).

The protein belongs to the universal ribosomal protein uS14 family. As to quaternary structure, part of the 30S ribosomal subunit. Contacts proteins S3 and S10.

Functionally, binds 16S rRNA, required for the assembly of 30S particles and may also be responsible for determining the conformation of the 16S rRNA at the A site. In Exiguobacterium sibiricum (strain DSM 17290 / CCUG 55495 / CIP 109462 / JCM 13490 / 255-15), this protein is Small ribosomal subunit protein uS14.